A 485-amino-acid polypeptide reads, in one-letter code: Cysteine protease atg4da (485 aa).

Residues 22-46 (ASASSKRHLGHGAVPDGIREGSGEP) form a disordered region. C131 serves as the catalytic Nucleophile. Active-site residues include D368 and H370.

Belongs to the peptidase C54 family.

It is found in the cytoplasm. The catalysed reaction is [protein]-C-terminal L-amino acid-glycyl-phosphatidylethanolamide + H2O = [protein]-C-terminal L-amino acid-glycine + a 1,2-diacyl-sn-glycero-3-phosphoethanolamine. It carries out the reaction [protein]-C-terminal L-amino acid-glycyl-phosphatidylserine + H2O = [protein]-C-terminal L-amino acid-glycine + a 1,2-diacyl-sn-glycero-3-phospho-L-serine. Cysteine protease that plays a key role in autophagy by mediating both proteolytic activation and delipidation of ATG8 family proteins. The protease activity is required for proteolytic activation of ATG8 family proteins to reveal a C-terminal glycine. Exposure of the glycine at the C-terminus is essential for ATG8 proteins conjugation to phosphatidylethanolamine (PE) and insertion to membranes, which is necessary for autophagy. In addition to the protease activity, also mediates delipidation of ATG8 family proteins. Catalyzes delipidation of PE-conjugated forms of ATG8 proteins during macroautophagy. Also involved in non-canonical autophagy, a parallel pathway involving conjugation of ATG8 proteins to single membranes at endolysosomal compartments, by catalyzing delipidation of ATG8 proteins conjugated to phosphatidylserine (PS). ATG4D plays a role in the autophagy-mediated neuronal homeostasis in the central nervous system. In Danio rerio (Zebrafish), this protein is Cysteine protease atg4da.